The chain runs to 709 residues: Elongation factor G (709 aa).

A tr-type G domain is found at 9 to 296 (AKVRNIGIMA…AVVRYLPSPL (288 aa)). GTP is bound by residues 18–25 (AHIDAGKT), 86–90 (DTPGH), and 140–143 (NKLD).

The protein belongs to the TRAFAC class translation factor GTPase superfamily. Classic translation factor GTPase family. EF-G/EF-2 subfamily.

The protein localises to the cytoplasm. Its function is as follows. Catalyzes the GTP-dependent ribosomal translocation step during translation elongation. During this step, the ribosome changes from the pre-translocational (PRE) to the post-translocational (POST) state as the newly formed A-site-bound peptidyl-tRNA and P-site-bound deacylated tRNA move to the P and E sites, respectively. Catalyzes the coordinated movement of the two tRNA molecules, the mRNA and conformational changes in the ribosome. This Streptomyces griseus subsp. griseus (strain JCM 4626 / CBS 651.72 / NBRC 13350 / KCC S-0626 / ISP 5235) protein is Elongation factor G.